The chain runs to 495 residues: Serine/threonine-protein kinase F (495 aa).

Residues 46 to 314 (YLPVKLLGQG…ASAEEVLAVL (269 aa)) enclose the Protein kinase domain. Residues 52-60 (LGQGGFGAA) and K77 each bind ATP. Catalysis depends on D187, which acts as the Proton acceptor. The tract at residues 316–354 (GGKGNQGKAPPGATVSTPQGTNTQIQPTPASSASPLTAP) is disordered. Positions 329 to 350 (TVSTPQGTNTQIQPTPASSASP) are enriched in polar residues.

It belongs to the protein kinase superfamily. Ser/Thr protein kinase family.

The enzyme catalyses L-seryl-[protein] + ATP = O-phospho-L-seryl-[protein] + ADP + H(+). The catalysed reaction is L-threonyl-[protein] + ATP = O-phospho-L-threonyl-[protein] + ADP + H(+). The chain is Serine/threonine-protein kinase F (spkF) from Synechocystis sp. (strain ATCC 27184 / PCC 6803 / Kazusa).